The chain runs to 248 residues: MSTVDKEELVQKAKLAEQSERYDDMAQAMKSVTETGVELSNEERNLLSVAYKNVVGARRSSWRVISSIEQKTEASARKQQLAREYRERVEKELREICYEVLGLLDKYLIPKASNPESKVFYLKMKGDYYRYLAEVATGDARNTVVDDSQTAYQDAFDISKGKMQPTHPIRLGLALNFSVFYYEILNSPDKACQLAKQAFDDAIAELDTLNEDSYKDSTLIMQLLRDNLTLWTSDTQGDEAEPQEGGDN.

The protein belongs to the 14-3-3 family. In terms of assembly, homodimer; homodimerization is not essential for modulating the activity of Slo. Interacts with phosphorylated Slob; the interaction with Slob mediates an indirect interaction with Slo. Interacts with phosphorylated yki. Interacts with hemo; this represses 14-3-3zeta activity which prevents the 14-3-3zeta-mediated activation of phosphoinositide 3-kinase Pi3K68D. This, in turn, inhibits the Pi3K68D-mediated conversion of phosphatidylinositol to phosphatidylinositol-3-phosphate and prevents progression of early endosomes through the maturation process which regulates subsequent steps of phagocytic processing. Interacts with REPTOR (when phosphorylated), this interaction may assist the cytoplasmic retention of REPTOR. As to expression, predominantly expressed in the ventral nerve cord of the embryo, and in the neural tissues of the head. Also found in the region posterior to the morphogenetic furrow of the eye imaginal disk where cells differentiate as photoreceptors.

The protein resides in the cytoplasm. The protein localises to the early endosome. Its function is as follows. Required in Raf-dependent cell proliferation and photoreceptor differentiation during eye development. Acts upstream of Raf and downstream of Ras, and is essential for viability. Acts as a negative regulator of the slo calcium channel via its interaction with slo-binding protein slob. Inhibits yki activity by restricting its nuclear localization. Binds to and promotes the activity of phosphoinositide 3-kinase Pi3K68D which converts phosphatidylinositol to phosphatidylinositol-3-phosphate and promotes maturation of early endosomes. The protein is 14-3-3 protein zeta (14-3-3zeta) of Drosophila melanogaster (Fruit fly).